We begin with the raw amino-acid sequence, 167 residues long: MNTLQKGFTLIELMIVIAIVGILAAVALPAYQDYTARAQVSEAILLAEGQKSAVTEYYLNHGIWPKDNTSAGVASSSSIKGKYVKEVKVENGVVTATMNSSNVNKEIQGKKLSLWAKRQDGSVKWFCGQPVTRNAKDDTVTADATGNDGKIDTKHLPSTCRDNFDAS.

The propeptide at 1 to 7 (MNTLQKG) is leader sequence. N-methylphenylalanine is present on F8. Residues 8-28 (FTLIELMIVIAIVGILAAVAL) form a helical membrane-spanning segment. Residue S70 is glycosylated (O-linked (GlcNAc...) serine). C127 and C160 form a disulfide bridge.

It belongs to the N-Me-Phe pilin family. The pili are polar flexible filaments of about 5.4 nanometers diameter and 2.5 micrometers average length; they consist of only a single polypeptide chain arranged in a helical configuration of five subunits per turn in the assembled pilus.

The protein localises to the fimbrium. It is found in the membrane. In terms of biological role, major component of the type IV pilus (T4P) that plays a role in cellular adherence, microcolony formation, resistance to neutrophil mediated killing, twitching motility as well as transformation. Mediates the attachment and the formation of bacterial microcolonies on host epithelial cells. Mechanistically, pili retractation induces host NF-kappa-B activation in infected cells, which is temporally associated with the formation of gonococcal microcolonies. In Neisseria gonorrhoeae, this protein is Type IV major pilin protein PilE (pilE).